Here is a 414-residue protein sequence, read N- to C-terminus: MTIKSLALQCRDAAQVLSQLSADAKQALLLAMANALDTDATQILQANQRDVDAAREKGTGAAMLDRLTLTPARLSAVGAALREVAVLPDPVGQVTRDDVRPNGIRVQKVRVPLGVIAMIYEARPNVTADAAALCIKAGNGVILRGGSEAIHSNTAIARALQRALREAGVPEAALTLVEDLRRETMLELLQLSDIVDLAIPRGGEGLIRFVAEHARVPVIKHYKGVCHLFVDASADVDLAVRLLVDGKASRPSACNSLETLLVHADIAERFLPAAAAALRARNVELRGDAATRAVLPEIAAASDDDYAAEFLDLILAIRVVPDLDTALAHIRQYGSDHTEVIATQTPANAETFVQSLRSAVVMVNASSRFSDGGELGLGAEIGISTTRLHSYGPMGLEALTVERFVVRGEGQVRH.

It belongs to the gamma-glutamyl phosphate reductase family.

The protein resides in the cytoplasm. It carries out the reaction L-glutamate 5-semialdehyde + phosphate + NADP(+) = L-glutamyl 5-phosphate + NADPH + H(+). It functions in the pathway amino-acid biosynthesis; L-proline biosynthesis; L-glutamate 5-semialdehyde from L-glutamate: step 2/2. Its function is as follows. Catalyzes the NADPH-dependent reduction of L-glutamate 5-phosphate into L-glutamate 5-semialdehyde and phosphate. The product spontaneously undergoes cyclization to form 1-pyrroline-5-carboxylate. This is Gamma-glutamyl phosphate reductase from Xanthomonas campestris pv. campestris (strain 8004).